The following is a 758-amino-acid chain: Vitamin K-dependent gamma-carboxylase (758 aa).

Positions 1-34 (MAVSARPARAPRGSDKVKKDKAAQTSGPRQGSRM) are disordered. Alanine 2 is subject to N-acetylalanine. Topologically, residues 2–60 (AVSARPARAPRGSDKVKKDKAAQTSGPRQGSRMGKLLGFEWTDVSSWERLVTLLNRPTD) are cytoplasmic. Basic and acidic residues predominate over residues 12–22 (RGSDKVKKDKA). A helical membrane pass occupies residues 61 to 81 (PAGLAVFRFLFGLMMVLDIPQ). The Lumenal portion of the chain corresponds to 82-113 (ERGLSSLDRRYLDGLEVCRFPLLDALQPLPLD). Cysteine 99 and cysteine 450 are joined by a disulfide. The chain crosses the membrane as a helical span at residues 114–134 (WMYLIYTIMFLGALGMMLGLC). Residues 135 to 136 (YR) lie on the Cytoplasmic side of the membrane. The helical transmembrane segment at 137 to 157 (ISCVLFLLPYWYVFLLDKTSW) threads the bilayer. The Lumenal segment spans residues 158 to 292 (NNHSYLYGLL…VSYFHCMNSQ (135 aa)). A helical transmembrane segment spans residues 293-313 (LFSIGMFPYVMLASSPLFCSP). At 314–363 (EWPRKLVAHCPKKLQELLPLRTAPQPSTSCMYKRSRARGSQKPGLRHKLS) the chain is on the cytoplasmic side. A helical membrane pass occupies residues 364-384 (TAFTLLYLLEQLFLPYSHFLT). Over 385 to 758 (QGYNNWTNGL…PDSHPVHSEF (374 aa)) the chain is Lumenal. Residues 727 to 758 (PFEPAGEPSPVNTDSSNPNPPEPDSHPVHSEF) form a disordered region. Residues 749–758 (PDSHPVHSEF) show a composition bias toward basic and acidic residues.

As to quaternary structure, monomer. May interact with CALU. The N-terminus is blocked.

It localises to the endoplasmic reticulum membrane. It catalyses the reaction 4-carboxy-L-glutamyl-[protein] + 2,3-epoxyphylloquinone + H2O + H(+) = phylloquinol + L-glutamyl-[protein] + CO2 + O2. Its function is as follows. Mediates the vitamin K-dependent carboxylation of glutamate residues to calcium-binding gamma-carboxyglutamate (Gla) residues with the concomitant conversion of the reduced hydroquinone form of vitamin K to vitamin K epoxide. Catalyzes gamma-carboxylation of various proteins, such as blood coagulation factors (F2, F7, F9 and F10), osteocalcin (BGLAP) or matrix Gla protein (MGP). The sequence is that of Vitamin K-dependent gamma-carboxylase (GGCX) from Bos taurus (Bovine).